Consider the following 242-residue polypeptide: UPF0309 protein BH3325 (242 aa).

An SIS domain is found at 34-217 (VSEAVMNGGR…HLLVQQGFEP (184 aa)).

This sequence belongs to the UPF0309 family.

This Halalkalibacterium halodurans (strain ATCC BAA-125 / DSM 18197 / FERM 7344 / JCM 9153 / C-125) (Bacillus halodurans) protein is UPF0309 protein BH3325.